Consider the following 199-residue polypeptide: 7-methyl-GTP pyrophosphatase (199 aa).

Catalysis depends on Asp-76, which acts as the Proton acceptor.

It belongs to the Maf family. YceF subfamily. It depends on a divalent metal cation as a cofactor.

The protein resides in the cytoplasm. The catalysed reaction is N(7)-methyl-GTP + H2O = N(7)-methyl-GMP + diphosphate + H(+). Nucleoside triphosphate pyrophosphatase that hydrolyzes 7-methyl-GTP (m(7)GTP). May have a dual role in cell division arrest and in preventing the incorporation of modified nucleotides into cellular nucleic acids. The protein is 7-methyl-GTP pyrophosphatase of Hahella chejuensis (strain KCTC 2396).